A 247-amino-acid polypeptide reads, in one-letter code: Probable transcriptional regulatory protein PMT_1423 (247 aa).

This sequence belongs to the TACO1 family.

Its subcellular location is the cytoplasm. The chain is Probable transcriptional regulatory protein PMT_1423 from Prochlorococcus marinus (strain MIT 9313).